The chain runs to 90 residues: Small ribosomal subunit protein bS20 (90 aa).

Belongs to the bacterial ribosomal protein bS20 family.

In terms of biological role, binds directly to 16S ribosomal RNA. The protein is Small ribosomal subunit protein bS20 of Acidiphilium cryptum (strain JF-5).